Reading from the N-terminus, the 32-residue chain is Conotoxin sr7a (32 aa).

3 cysteine pairs are disulfide-bonded: Cys-1–Cys-17, Cys-8–Cys-21, and Cys-16–Cys-31. Ser-32 is modified (serine amide).

In terms of tissue distribution, expressed by the venom duct.

The protein localises to the secreted. Elicits hyperactivity when injected intracranially into mice and produces paralysis when injected into the pedal muscle of freshwater snails, Pomacea paludosa, but it has no apparent effect after intramuscular injection into the limpet Patella opea or the freshwater fish Lebistes reticulatus. The protein is Conotoxin sr7a of Conus spurius (Alphabet cone).